Here is a 106-residue protein sequence, read N- to C-terminus: ATP-dependent Clp protease adapter protein ClpS (106 aa).

This sequence belongs to the ClpS family. As to quaternary structure, binds to the N-terminal domain of the chaperone ClpA.

In terms of biological role, involved in the modulation of the specificity of the ClpAP-mediated ATP-dependent protein degradation. The sequence is that of ATP-dependent Clp protease adapter protein ClpS from Salmonella arizonae (strain ATCC BAA-731 / CDC346-86 / RSK2980).